A 167-amino-acid chain; its full sequence is Phospholipase A2 (167 aa).

Residues 1-18 form the signal peptide; that stretch reads MQVVLGSLFLLLLSTSHG. The propeptide occupies 19 to 33; the sequence is WQIRDRIGDNELEER. 3 residues coordinate Ca(2+): Trp41, Gly43, and Gly45. 5 disulfide bridges follow: Cys42–Cys64, Cys63–Cys103, Cys70–Cys96, Cys94–Cys128, and Cys138–Cys146. An N-linked (GlcNAc...) asparagine glycan is attached at Asn46. His67 is a catalytic residue. Residue Asp68 coordinates Ca(2+). Asp97 is an active-site residue.

The protein belongs to the phospholipase A2 family. Group III subfamily. Ca(2+) is required as a cofactor. In terms of processing, N-glycosylated; contains mannose, N-acetylglucosamine and fucose alphal-6 and/or alphal-3 linked to the innermost N-acetylglucosamine. In terms of tissue distribution, expressed by the venom gland.

It is found in the secreted. The enzyme catalyses a 1,2-diacyl-sn-glycero-3-phosphocholine + H2O = a 1-acyl-sn-glycero-3-phosphocholine + a fatty acid + H(+). Its function is as follows. In vivo, intraplantar injection in mice cause spontaneous pain behaviors and paw swelling. PLA2 catalyzes the calcium-dependent hydrolysis of the 2-acyl groups in 3-sn-phosphoglycerides. The protein is Phospholipase A2 of Apis mellifera (Honeybee).